Reading from the N-terminus, the 156-residue chain is MARYDNIAEFESDLNGKGLRVGIVMSRFNQDVCEGLLSACTEELQKLGVSPELIRIATVPGALEIPLVLQKMGQSGKFDALIALGAVIRGETYHFELVSNEMGAGITRIGLDTGIPIANGVLTTEDDDQALARMQEKGSDCARAAVEMANLLKVLQ.

5-amino-6-(D-ribitylamino)uracil-binding positions include Phe28, 62–64 (ALE), and 86–88 (AVI). A (2S)-2-hydroxy-3-oxobutyl phosphate-binding site is contributed by 91–92 (ET). His94 functions as the Proton donor in the catalytic mechanism. 5-amino-6-(D-ribitylamino)uracil is bound at residue Asn119. Arg133 provides a ligand contact to (2S)-2-hydroxy-3-oxobutyl phosphate.

This sequence belongs to the DMRL synthase family.

It carries out the reaction (2S)-2-hydroxy-3-oxobutyl phosphate + 5-amino-6-(D-ribitylamino)uracil = 6,7-dimethyl-8-(1-D-ribityl)lumazine + phosphate + 2 H2O + H(+). The protein operates within cofactor biosynthesis; riboflavin biosynthesis; riboflavin from 2-hydroxy-3-oxobutyl phosphate and 5-amino-6-(D-ribitylamino)uracil: step 1/2. In terms of biological role, catalyzes the formation of 6,7-dimethyl-8-ribityllumazine by condensation of 5-amino-6-(D-ribitylamino)uracil with 3,4-dihydroxy-2-butanone 4-phosphate. This is the penultimate step in the biosynthesis of riboflavin. The protein is 6,7-dimethyl-8-ribityllumazine synthase of Azoarcus sp. (strain BH72).